Consider the following 549-residue polypeptide: Probable protein kinase UbiB (549 aa).

One can recognise a Protein kinase domain in the interval 123-501 (DFDDTPLASA…QQKAHKSNYL (379 aa)). ATP is bound by residues 129 to 137 (LASASISQV) and Lys-152. Residue Asp-287 is the Proton acceptor of the active site. 2 consecutive transmembrane segments (helical) span residues 498 to 518 (SNYLLITSAILVICGTILLNQ) and 520 to 540 (ATLWPSYGSIGIGITLWVLGW).

It belongs to the ABC1 family. UbiB subfamily.

The protein localises to the cell inner membrane. Its pathway is cofactor biosynthesis; ubiquinone biosynthesis [regulation]. Its function is as follows. Is probably a protein kinase regulator of UbiI activity which is involved in aerobic coenzyme Q (ubiquinone) biosynthesis. The polypeptide is Probable protein kinase UbiB (Shewanella pealeana (strain ATCC 700345 / ANG-SQ1)).